The primary structure comprises 402 residues: S-adenosylmethionine synthase (402 aa).

137 to 142 (GQGSAD) contributes to the ATP binding site.

This sequence belongs to the AdoMet synthase 2 family. Mg(2+) is required as a cofactor.

It catalyses the reaction L-methionine + ATP + H2O = S-adenosyl-L-methionine + phosphate + diphosphate. It participates in amino-acid biosynthesis; S-adenosyl-L-methionine biosynthesis; S-adenosyl-L-methionine from L-methionine: step 1/1. In terms of biological role, catalyzes the formation of S-adenosylmethionine from methionine and ATP. The chain is S-adenosylmethionine synthase from Pyrobaculum aerophilum (strain ATCC 51768 / DSM 7523 / JCM 9630 / CIP 104966 / NBRC 100827 / IM2).